The primary structure comprises 290 residues: MSAAILDGKALAARIQAELTCEVQSLQERFGRPPGLSVLWVGDNPASAAYVRNKNKSGQAVGIDVAKSQHLKASLSETQLLALIDRLNADVTVDGILVQLPLPEHIDSGRVLNRIAPEKDVDGLHPVNLGRLVRGEPGLRSCTPAGVMRILSEAGVPLAGKTAVVIGRSILVGKPVALMLLEKDATVITTHSRTADLAAITQMADVLVVAAGRPELVTAAMVRPGAVVIDVGINRVTDYEGNSRLVGDVDFDSVRDVAAAITPVPRGVGPMTVTMLLANTVQSYKQRLIE.

NADP(+)-binding positions include 167–169 (GRS), S192, and I233.

Belongs to the tetrahydrofolate dehydrogenase/cyclohydrolase family. As to quaternary structure, homodimer.

The catalysed reaction is (6R)-5,10-methylene-5,6,7,8-tetrahydrofolate + NADP(+) = (6R)-5,10-methenyltetrahydrofolate + NADPH. The enzyme catalyses (6R)-5,10-methenyltetrahydrofolate + H2O = (6R)-10-formyltetrahydrofolate + H(+). Its pathway is one-carbon metabolism; tetrahydrofolate interconversion. In terms of biological role, catalyzes the oxidation of 5,10-methylenetetrahydrofolate to 5,10-methenyltetrahydrofolate and then the hydrolysis of 5,10-methenyltetrahydrofolate to 10-formyltetrahydrofolate. The sequence is that of Bifunctional protein FolD from Gloeobacter violaceus (strain ATCC 29082 / PCC 7421).